The primary structure comprises 514 residues: Sugar transport protein 3 (514 aa).

Residues 1–19 (MVAEEARKEAMAKSVSGGK) lie on the Cytoplasmic side of the membrane. The next 12 helical transmembrane spans lie at 20–40 (ITYFVVASCVMAAMGGVIFGY), 87–107 (LLTSFTSSLYVSGLIATLLAS), 124–144 (VSFLAGAALGGSAQNVAMLII), 147–167 (LLLGVGVGFANQSVPLYLSEM), 174–194 (GAISNGFQLCIGIGFLSANVI), 207–227 (ISLATAAIPASILTLGSLFLP), 289–309 (LVMALVIPFFQQVTGINVVAF), 327–347 (MSTLVTGIVGTSSTLLSMLVV), 356–376 (FLIGGLQMLVSQVTIGVIVMV), 392–412 (VVVLVCVYVAGFGWSWGPLGW), 430–450 (VTVAVSFVFTFAVAQSAPPML), and 456–476 (GIFFFYGGWLVVMTVAVQLFL). Topologically, residues 477 to 514 (PETKNVPIEKVVGLWEKHWFWRRMTSKRDIQETTILSH) are cytoplasmic.

This sequence belongs to the major facilitator superfamily. Sugar transporter (TC 2.A.1.1) family.

It localises to the membrane. In terms of biological role, mediates an active uptake of hexoses, probably by sugar/hydrogen symport. This is Sugar transport protein 3 (STP3) from Arabidopsis thaliana (Mouse-ear cress).